Consider the following 627-residue polypeptide: Altered inheritance of mitochondria protein 9, mitochondrial (627 aa).

Residues 1–43 (MIRYTVAGHSRRCVVGASKRVGAIKCITVAATKRFISNKPNEV) constitute a mitochondrion transit peptide.

The protein belongs to the AIM9 family.

The protein localises to the mitochondrion. This Saccharomyces cerevisiae (strain YJM789) (Baker's yeast) protein is Altered inheritance of mitochondria protein 9, mitochondrial (AIM9).